The following is a 127-amino-acid chain: Aspartate 1-decarboxylase (127 aa).

Ser-25 acts as the Schiff-base intermediate with substrate; via pyruvic acid in catalysis. Ser-25 is subject to Pyruvic acid (Ser). A substrate-binding site is contributed by Thr-57. The active-site Proton donor is the Tyr-58. 73-75 contributes to the substrate binding site; sequence GAA.

It belongs to the PanD family. As to quaternary structure, heterooctamer of four alpha and four beta subunits. Pyruvate serves as cofactor. Is synthesized initially as an inactive proenzyme, which is activated by self-cleavage at a specific serine bond to produce a beta-subunit with a hydroxyl group at its C-terminus and an alpha-subunit with a pyruvoyl group at its N-terminus.

Its subcellular location is the cytoplasm. It catalyses the reaction L-aspartate + H(+) = beta-alanine + CO2. The protein operates within cofactor biosynthesis; (R)-pantothenate biosynthesis; beta-alanine from L-aspartate: step 1/1. Functionally, catalyzes the pyruvoyl-dependent decarboxylation of aspartate to produce beta-alanine. This chain is Aspartate 1-decarboxylase, found in Neisseria meningitidis serogroup B (strain ATCC BAA-335 / MC58).